We begin with the raw amino-acid sequence, 446 residues long: Hercynine oxygenase (446 aa).

Residue His-51 participates in Fe cation binding. 87–90 (RASR) provides a ligand contact to gamma-L-glutamyl-L-cysteine. Positions 134 and 138 each coordinate Fe cation. Positions 416 and 420 each coordinate gamma-L-glutamyl-L-cysteine.

It belongs to the EgtB family. As to quaternary structure, monomer. The cofactor is Fe(2+).

It catalyses the reaction gamma-L-glutamyl-L-cysteine + hercynine + O2 = gamma-L-glutamyl-hercynylcysteine S-oxide + H2O. It functions in the pathway amino-acid biosynthesis; ergothioneine biosynthesis. Catalyzes the oxidative sulfurization of hercynine (N-alpha,N-alpha,N-alpha-trimethyl-L-histidine) into hercynyl-gamma-L-glutamyl-L-cysteine sulfoxide, a step in the biosynthesis pathway of ergothioneine. The chain is Hercynine oxygenase from Mycolicibacterium thermoresistibile (strain ATCC 19527 / DSM 44167 / CIP 105390 / JCM 6362 / NCTC 10409 / 316) (Mycobacterium thermoresistibile).